We begin with the raw amino-acid sequence, 361 residues long: MSVRRVVILGSTGSIGMQALEVVAANPDRFQVVGLTAGSSAGQLAEQAERFGVRETALGAGDSERLVRSVDADVVLNGITGSVGLGPTLAALESGRTLALANKESLIVGGELVKRAAAPGQLIPVDSEHSALAQALRSGAAGEVSRLVLTASGGPFRGRSRESLRQVTPAEALAHPTWDMGLVVTTNSSTLVNKGLEVIEAHLLFGVPYDRIEVTVHPQSVVHSMVEFVDGSTIAQASPPDMRLPISLGLGWPDRVPGTGLPLDWTRAHTWTFEPLDGEAFPAVALAKCVGVAGGTYPAVFNAANEQAVAAFHAGAIGYLDIVDTVERVVDAHEPQAELTREGLAEAEGWARSAADRMLGR.

The NADPH site is built by Thr-12, Gly-13, Ser-14, Ile-15, Gly-38, and Asn-102. 1-deoxy-D-xylulose 5-phosphate is bound at residue Lys-103. Glu-104 is a binding site for NADPH. Residue Asp-126 participates in Mn(2+) binding. 1-deoxy-D-xylulose 5-phosphate-binding residues include Ser-127, Glu-128, Ser-152, and His-175. Residue Glu-128 participates in Mn(2+) binding. An NADPH-binding site is contributed by Gly-181. Ser-188, Asn-193, Lys-194, and Glu-197 together coordinate 1-deoxy-D-xylulose 5-phosphate. Glu-197 is a Mn(2+) binding site.

Belongs to the DXR family. Mg(2+) is required as a cofactor. It depends on Mn(2+) as a cofactor.

It carries out the reaction 2-C-methyl-D-erythritol 4-phosphate + NADP(+) = 1-deoxy-D-xylulose 5-phosphate + NADPH + H(+). The protein operates within isoprenoid biosynthesis; isopentenyl diphosphate biosynthesis via DXP pathway; isopentenyl diphosphate from 1-deoxy-D-xylulose 5-phosphate: step 1/6. Functionally, catalyzes the NADPH-dependent rearrangement and reduction of 1-deoxy-D-xylulose-5-phosphate (DXP) to 2-C-methyl-D-erythritol 4-phosphate (MEP). In Leifsonia xyli subsp. xyli (strain CTCB07), this protein is 1-deoxy-D-xylulose 5-phosphate reductoisomerase.